Here is a 493-residue protein sequence, read N- to C-terminus: Probable cytochrome P450 508A2 (493 aa).

A helical transmembrane segment spans residues 1–21 (MIFGIIVYLFLIYILHNAYSK). Residue Cys-439 coordinates heme.

This sequence belongs to the cytochrome P450 family. Requires heme as cofactor.

Its subcellular location is the membrane. This chain is Probable cytochrome P450 508A2 (cyp508A2-1), found in Dictyostelium discoideum (Social amoeba).